The chain runs to 534 residues: Protein BFR2 (534 aa).

Residues 27-148 form a disordered region; the sequence is ENASLFQHNE…ETEEAQQKRH (122 aa). S41 and S44 each carry phosphoserine. The segment covering 52–77 has biased composition (basic and acidic residues); that stretch reads EETKKAHYLEVEKSKLRAEKGLELND. Positions 86–161 form a coiled coil; the sequence is SRQALYEEVS…KLIQQETKQA (76 aa). Composition is skewed to acidic residues over residues 93 to 114 and 121 to 142; these read EVSE…EEDA and SEDE…ETEE. S366, S372, and S379 each carry phosphoserine.

Belongs to the AATF family.

Its subcellular location is the nucleus. The protein localises to the nucleolus. Its function is as follows. Involved in endoplasmic reticulum to Golgi transport. Involved in a protein-transport step blocked by brefeldin A, which disrupts the Golgi apparatus and its incoming protein flux. May also be involved for mass growth or cell proliferation. The polypeptide is Protein BFR2 (BFR2) (Saccharomyces cerevisiae (strain ATCC 204508 / S288c) (Baker's yeast)).